A 490-amino-acid chain; its full sequence is Cobyric acid synthase (490 aa).

A GATase cobBQ-type domain is found at 252 to 428; sequence ARRVAVVRLP…WHGAFEGDAL (177 aa). Cysteine 333 serves as the catalytic Nucleophile. The active site involves histidine 420.

It belongs to the CobB/CobQ family. CobQ subfamily.

It functions in the pathway cofactor biosynthesis; adenosylcobalamin biosynthesis. Functionally, catalyzes amidations at positions B, D, E, and G on adenosylcobyrinic A,C-diamide. NH(2) groups are provided by glutamine, and one molecule of ATP is hydrogenolyzed for each amidation. The sequence is that of Cobyric acid synthase from Mycolicibacterium vanbaalenii (strain DSM 7251 / JCM 13017 / BCRC 16820 / KCTC 9966 / NRRL B-24157 / PYR-1) (Mycobacterium vanbaalenii).